A 318-amino-acid chain; its full sequence is Trans-prenyltransferase (318 aa).

A helical transmembrane segment spans residues 1–21 (MLHLIYISIIVVLIIILISYT). Isopentenyl diphosphate contacts are provided by Lys-85, Arg-88, and His-122. Mg(2+) contacts are provided by Asp-129 and Asp-135. Arg-140 provides a ligand contact to dimethylallyl diphosphate. Residue Arg-141 coordinates isopentenyl diphosphate. The dimethylallyl diphosphate site is built by Lys-216, Thr-217, and Gln-254.

Belongs to the FPP/GGPP synthase family. Asfivirus trans-prenyltransferase subfamily. Requires Mg(2+) as cofactor.

Its subcellular location is the host endoplasmic reticulum. The protein localises to the host membrane. The catalysed reaction is isopentenyl diphosphate + dimethylallyl diphosphate = (2E)-geranyl diphosphate + diphosphate. It carries out the reaction isopentenyl diphosphate + (2E)-geranyl diphosphate = (2E,6E)-farnesyl diphosphate + diphosphate. It catalyses the reaction isopentenyl diphosphate + (2E,6E)-farnesyl diphosphate = (2E,6E,10E)-geranylgeranyl diphosphate + diphosphate. The enzyme catalyses isopentenyl diphosphate + (2E,6E,10E)-geranylgeranyl diphosphate = (2E,6E,10E,14E)-geranylfarnesyl diphosphate + diphosphate. Its pathway is isoprenoid biosynthesis; farnesyl diphosphate biosynthesis; farnesyl diphosphate from geranyl diphosphate and isopentenyl diphosphate: step 1/1. It participates in isoprenoid biosynthesis; geranyl diphosphate biosynthesis; geranyl diphosphate from dimethylallyl diphosphate and isopentenyl diphosphate: step 1/1. The protein operates within isoprenoid biosynthesis; geranylgeranyl diphosphate biosynthesis; geranylgeranyl diphosphate from farnesyl diphosphate and isopentenyl diphosphate: step 1/1. Its function is as follows. Trans-prenyltransferase that catalyzes the sequential condensation of isopentenyl diphosphate (IPP) with different allylic diphosphates, such as dimethylallyl diphosphate (DMAPP), geranyl diphosphate (GPP), farnesyl diphosphate (FPP) and geranylgeranyl diphosphate (GGPP), farnesyl diphosphate being the best allylic substrate. This African swine fever virus (isolate Warthog/Namibia/Wart80/1980) (ASFV) protein is Trans-prenyltransferase.